The chain runs to 528 residues: Phosphoenolpyruvate carboxykinase (ATP) (528 aa).

Arginine 56, tyrosine 192, and lysine 198 together coordinate substrate. Residues lysine 198, histidine 217, and 233 to 241 contribute to the ATP site; that span reads GLSGTGKTT. Positions 198 and 217 each coordinate Mn(2+). A Mn(2+)-binding site is contributed by aspartate 254. Glutamate 282, arginine 319, and threonine 444 together coordinate ATP. Arginine 319 is a binding site for substrate.

It belongs to the phosphoenolpyruvate carboxykinase (ATP) family. It depends on Mn(2+) as a cofactor.

The protein resides in the cytoplasm. It catalyses the reaction oxaloacetate + ATP = phosphoenolpyruvate + ADP + CO2. It functions in the pathway carbohydrate biosynthesis; gluconeogenesis. Involved in the gluconeogenesis. Catalyzes the conversion of oxaloacetate (OAA) to phosphoenolpyruvate (PEP) through direct phosphoryl transfer between the nucleoside triphosphate and OAA. The polypeptide is Phosphoenolpyruvate carboxykinase (ATP) (Geobacillus thermodenitrificans (strain NG80-2)).